We begin with the raw amino-acid sequence, 324 residues long: 4-hydroxy-2-oxoglutarate aldolase, mitochondrial (324 aa).

A mitochondrion-targeting transit peptide spans 1–22 (MFAHRSFSLLCRRSAVTSWRSQ). Substrate is bound at residue 74-75 (SN). The active-site Schiff-base intermediate with substrate is the Lys-193. The substrate site is built by Ser-195 and Gly-219.

Belongs to the DapA family. As to quaternary structure, homotetramer.

The protein resides in the mitochondrion. The catalysed reaction is (4S)-4-hydroxy-2-oxoglutarate = glyoxylate + pyruvate. The enzyme catalyses (4R)-4-hydroxy-2-oxoglutarate = glyoxylate + pyruvate. Inhibited by divalent cations. Catalyzes the final step in the metabolic pathway of hydroxyproline. This chain is 4-hydroxy-2-oxoglutarate aldolase, mitochondrial, found in Danio rerio (Zebrafish).